The sequence spans 442 residues: Histidinol dehydrogenase (442 aa).

NAD(+) contacts are provided by tyrosine 142, glutamine 204, and asparagine 227. Positions 250, 272, and 275 each coordinate substrate. Zn(2+) is bound by residues glutamine 272 and histidine 275. Catalysis depends on proton acceptor residues glutamate 340 and histidine 341. Substrate contacts are provided by histidine 341, aspartate 374, glutamate 428, and histidine 433. Zn(2+) is bound at residue aspartate 374. Zn(2+) is bound at residue histidine 433.

It belongs to the histidinol dehydrogenase family. It depends on Zn(2+) as a cofactor.

The catalysed reaction is L-histidinol + 2 NAD(+) + H2O = L-histidine + 2 NADH + 3 H(+). Its pathway is amino-acid biosynthesis; L-histidine biosynthesis; L-histidine from 5-phospho-alpha-D-ribose 1-diphosphate: step 9/9. Its function is as follows. Catalyzes the sequential NAD-dependent oxidations of L-histidinol to L-histidinaldehyde and then to L-histidine. The sequence is that of Histidinol dehydrogenase from Prochlorococcus marinus (strain MIT 9313).